The primary structure comprises 229 residues: Cytochrome c oxidase subunit 2 (229 aa).

At Met1 to Tyr26 the chain is on the mitochondrial intermembrane side. A helical membrane pass occupies residues Thr27 to Ser48. Residues Ser49–Glu62 are Mitochondrial matrix-facing. A helical transmembrane segment spans residues Thr63–Gln82. Residues Leu83 to Glu229 are Mitochondrial intermembrane-facing. Cu cation is bound by residues His161, Cys196, Glu198, Cys200, His204, and Met207. Glu198 serves as a coordination point for Mg(2+).

It belongs to the cytochrome c oxidase subunit 2 family. Component of the cytochrome c oxidase (complex IV, CIV), a multisubunit enzyme composed of a catalytic core of 3 subunits and several supernumerary subunits. The complex exists as a monomer or a dimer and forms supercomplexes (SCs) in the inner mitochondrial membrane with ubiquinol-cytochrome c oxidoreductase (cytochrome b-c1 complex, complex III, CIII). Cu cation serves as cofactor.

It localises to the mitochondrion inner membrane. The enzyme catalyses 4 Fe(II)-[cytochrome c] + O2 + 8 H(+)(in) = 4 Fe(III)-[cytochrome c] + 2 H2O + 4 H(+)(out). Functionally, component of the cytochrome c oxidase, the last enzyme in the mitochondrial electron transport chain which drives oxidative phosphorylation. The respiratory chain contains 3 multisubunit complexes succinate dehydrogenase (complex II, CII), ubiquinol-cytochrome c oxidoreductase (cytochrome b-c1 complex, complex III, CIII) and cytochrome c oxidase (complex IV, CIV), that cooperate to transfer electrons derived from NADH and succinate to molecular oxygen, creating an electrochemical gradient over the inner membrane that drives transmembrane transport and the ATP synthase. Cytochrome c oxidase is the component of the respiratory chain that catalyzes the reduction of oxygen to water. Electrons originating from reduced cytochrome c in the intermembrane space (IMS) are transferred via the dinuclear copper A center (CU(A)) of subunit 2 and heme A of subunit 1 to the active site in subunit 1, a binuclear center (BNC) formed by heme A3 and copper B (CU(B)). The BNC reduces molecular oxygen to 2 water molecules using 4 electrons from cytochrome c in the IMS and 4 protons from the mitochondrial matrix. The chain is Cytochrome c oxidase subunit 2 (COII) from Patiria pectinifera (Starfish).